The following is a 324-amino-acid chain: T-cell acute lymphocytic leukemia protein 1 homolog (324 aa).

The segment at 1 to 49 (MMEKLKSEQFPLSPSAEGCASPPRGDGDARGKQEGTTAETGEHRLPEEL) is disordered. The region spanning 185–237 (VRRIFTNSRERWRQQNVNGAFAELRKLIPTHPPDKKLSKNEILRLAMKYINFL) is the bHLH domain. Positions 276–324 (SPNSSCGSLLDGDASPESFTEDQDSSVESRPSARGLHHSSLPLDGNAQR) are disordered.

As to expression, expressed in hemopoietic and endothelial lineages. Isoform beta emerges first, expressing in the entire anterior and posterior lateral mesoderm (ALM and PLM respectively), and in the ventral wall of the dorsal aorta, where definitive hemopoiesis begins. Isoform alpha expresses later as two pairs of stripes in the PLM and ALM, and becomes restricted to the intermediate cell mass (ICM) by the 18-somite stage. The ICM is the key site of primitive hemopoiesis, giving rise to the erythroid lineage. Also expressed in all stages of endocardial cell migration and in the developing midbrain, hindbrain and spinal cord. In adults, expressed in the main hemopoietic organs, namely the kidney (where isoform alpha is the predominant isoform) and the spleen. Also expressed in the liver, gill and gonads.

The protein localises to the nucleus. In terms of biological role, transcription factor that plays a pivotal role in hemopoietic and endothelial development, acting synergistically with lmo2 and downstream of clo. Specifies mesodermal precursors to a hemangioblast cell fate. Hemangioblasts are bipotential precursors of blood and endothelium, and in the absence of hemopoietic induction cues such as gata1, tal1/scl-lmo2-induced hemangioblasts differentiate into endothelial cells. Isoform alpha and isoform beta are redundant for the initiation of primitive hemopoiesis but have distinct roles in the regulation of primitive erythroid differentiation and definitive hemopoietic stem cell specification, most likely due to differences in expression levels. Specification of definitive hemopoietic stem cells requires isoform beta. DNA binding is required for erythroid maturation, but not for its other hemopoietic functions. Endothelial roles include development of the dorsal aorta, the site of definitive hemopoiesis in the embryo. Required for angiogenesis but not angioblast specification. Has an additional role in endocardium formation during heart development. May play a role in central nervous system development. In Danio rerio (Zebrafish), this protein is T-cell acute lymphocytic leukemia protein 1 homolog.